A 349-amino-acid chain; its full sequence is DCD domain-containing protein NRP (349 aa).

The disordered stretch occupies residues 157–201; sequence NNNKNKGIDEDHQIQKGGKKNRKNQQNNNNQRNEDDKNNGLDKRF. Basic and acidic residues predominate over residues 188 to 201; sequence RNEDDKNNGLDKRF. Residues 214-346 form the DCD domain; that stretch reads ETIGGYIFVC…VLSLLDIFAD (133 aa).

Interacts with CRY2 in the cytoplasm. Interacts with Verticillium dahliae PevD1. Interacts with FYPP3. In terms of tissue distribution, highly expressed in sensecent leaves, cauline leaves and sepals. Expressed in the shoot apical meristem, leaf veins, central cylinder, root hair zone, root tips, rosette leaves, flowers and siliques.

Its subcellular location is the cytoplasm. Functionally, contributes to the initial phase of responses to abiotic and biotic stress signals. Binds FYPP3 and facilitates FYPP3 degradation to promote abscisic acid (ABA) response. The polypeptide is DCD domain-containing protein NRP (Arabidopsis thaliana (Mouse-ear cress)).